The sequence spans 93 residues: Phosphoribosyl-ATP pyrophosphatase (93 aa).

It belongs to the PRA-PH family.

Its subcellular location is the cytoplasm. It catalyses the reaction 1-(5-phospho-beta-D-ribosyl)-ATP + H2O = 1-(5-phospho-beta-D-ribosyl)-5'-AMP + diphosphate + H(+). It functions in the pathway amino-acid biosynthesis; L-histidine biosynthesis; L-histidine from 5-phospho-alpha-D-ribose 1-diphosphate: step 2/9. This chain is Phosphoribosyl-ATP pyrophosphatase (hisE), found in Mycobacterium bovis (strain ATCC BAA-935 / AF2122/97).